The following is a 321-amino-acid chain: D-alanine--D-alanine ligase (321 aa).

Residues 121 to 315 (RIWFLTNNIN…FTNLIEEIIK (195 aa)) form the ATP-grasp domain. Position 147–199 (147–199 (PMKRPYVIKPLTQGSSIGVEVIFAEDDFNFADYDFPYGDQVIIEQYIKGRELQ)) interacts with ATP. Mg(2+) contacts are provided by glutamate 268, glutamate 282, and asparagine 284.

It belongs to the D-alanine--D-alanine ligase family. It depends on Mg(2+) as a cofactor. Requires Mn(2+) as cofactor.

It localises to the cytoplasm. It catalyses the reaction 2 D-alanine + ATP = D-alanyl-D-alanine + ADP + phosphate + H(+). It functions in the pathway cell wall biogenesis; peptidoglycan biosynthesis. In terms of biological role, cell wall formation. The protein is D-alanine--D-alanine ligase of Rickettsia rickettsii (strain Iowa).